The sequence spans 56 residues: Small ribosomal subunit protein uS14A (56 aa).

Positions 21 and 24 each coordinate Zn(2+). S25 is modified (phosphoserine). Residues C39 and C42 each contribute to the Zn(2+) site.

It belongs to the universal ribosomal protein uS14 family. Component of the small ribosomal subunit (SSU). Mature yeast ribosomes consist of a small (40S) and a large (60S) subunit. The 40S small subunit contains 1 molecule of ribosomal RNA (18S rRNA) and 33 different proteins (encoded by 57 genes). The large 60S subunit contains 3 rRNA molecules (25S, 5.8S and 5S rRNA) and 46 different proteins (encoded by 81 genes). Requires Zn(2+) as cofactor.

Its subcellular location is the cytoplasm. In terms of biological role, component of the ribosome, a large ribonucleoprotein complex responsible for the synthesis of proteins in the cell. The small ribosomal subunit (SSU) binds messenger RNAs (mRNAs) and translates the encoded message by selecting cognate aminoacyl-transfer RNA (tRNA) molecules. The large subunit (LSU) contains the ribosomal catalytic site termed the peptidyl transferase center (PTC), which catalyzes the formation of peptide bonds, thereby polymerizing the amino acids delivered by tRNAs into a polypeptide chain. The nascent polypeptides leave the ribosome through a tunnel in the LSU and interact with protein factors that function in enzymatic processing, targeting, and the membrane insertion of nascent chains at the exit of the ribosomal tunnel. This Saccharomyces cerevisiae (strain ATCC 204508 / S288c) (Baker's yeast) protein is Small ribosomal subunit protein uS14A.